Consider the following 357-residue polypeptide: 3-isopropylmalate dehydrogenase (357 aa).

Arginine 99, arginine 109, arginine 133, and aspartate 223 together coordinate substrate. 3 residues coordinate Mg(2+): aspartate 223, aspartate 247, and aspartate 251. 283 to 295 (GSAPDIAGEQRAD) provides a ligand contact to NAD(+).

It belongs to the isocitrate and isopropylmalate dehydrogenases family. LeuB type 2 subfamily. In terms of assembly, homodimer. Requires Mg(2+) as cofactor. Mn(2+) is required as a cofactor.

The protein localises to the cytoplasm. It catalyses the reaction (2R,3S)-3-isopropylmalate + NAD(+) = 4-methyl-2-oxopentanoate + CO2 + NADH. The protein operates within amino-acid biosynthesis; L-leucine biosynthesis; L-leucine from 3-methyl-2-oxobutanoate: step 3/4. Functionally, catalyzes the oxidation of 3-carboxy-2-hydroxy-4-methylpentanoate (3-isopropylmalate) to 3-carboxy-4-methyl-2-oxopentanoate. The product decarboxylates to 4-methyl-2 oxopentanoate. The polypeptide is 3-isopropylmalate dehydrogenase (Leifsonia xyli subsp. xyli (strain CTCB07)).